A 128-amino-acid chain; its full sequence is Probable 4-amino-4-deoxy-L-arabinose-phosphoundecaprenol flippase subunit ArnF (128 aa).

At 1 to 2 (MC) the chain is on the cytoplasmic side. A helical membrane pass occupies residues 3-23 (LIWGLFSVIIASVAQLSLGFA). The Periplasmic portion of the chain corresponds to 24-35 (ASHLPPMTHLWD). A helical transmembrane segment spans residues 36–56 (FIAALLAFGLDARILLLGLLG). Over 57–76 (YLLSVFCWYKTLHKLALSKA) the chain is Cytoplasmic. Residues 77–97 (YALLSMSYVLVWIASMVLPGW) form a helical membrane-spanning segment. The Periplasmic portion of the chain corresponds to 98 to 100 (EGT). Residues 101-121 (FSLKALLGVACIMSGLMLIFL) form a helical membrane-spanning segment. Over 122-128 (PTTKQRY) the chain is Cytoplasmic.

The protein belongs to the ArnF family. Heterodimer of ArnE and ArnF.

It localises to the cell inner membrane. It participates in bacterial outer membrane biogenesis; lipopolysaccharide biosynthesis. Translocates 4-amino-4-deoxy-L-arabinose-phosphoundecaprenol (alpha-L-Ara4N-phosphoundecaprenol) from the cytoplasmic to the periplasmic side of the inner membrane. The protein is Probable 4-amino-4-deoxy-L-arabinose-phosphoundecaprenol flippase subunit ArnF of Shigella flexneri.